The following is a 304-amino-acid chain: Non-specific ribonucleoside hydrolase RihC (304 aa).

H233 is an active-site residue.

Belongs to the IUNH family. RihC subfamily.

Its function is as follows. Hydrolyzes both purine and pyrimidine ribonucleosides with a broad-substrate specificity. The protein is Non-specific ribonucleoside hydrolase RihC of Shigella boydii serotype 4 (strain Sb227).